We begin with the raw amino-acid sequence, 104 residues long: Circadian clock oscillator protein KaiB (104 aa).

This sequence belongs to the KaiB family. The KaiABC complex composition changes during the circadian cycle to control KaiC phosphorylation. Complexes KaiC(6), KaiA(2-4):KaiC(6), KaiB(6):KaiC(6) and KaiC(6):KaiB(6):KaiA(12) are among the most important forms, many form cooperatively. Undergoes a major conformational rearrangment; in the free state forms homotetramers as a dimer of dimers. When bound to the CI domain of KaiC switches to a monomeric thioredoxin-fold (KaiB(fs)). KaiB(fs) binds CikA, leading it to dephosphorylate phospho-RpaA.

Functionally, key component of the KaiABC oscillator complex, which constitutes the main circadian regulator in cyanobacteria. Complex composition changes during the circadian cycle to control KaiC phosphorylation. KaiA stimulates KaiC autophosphorylation, while KaiB sequesters KaiA, leading to KaiC autodephosphorylation. Phospho-Ser-431 KaiC accumulation triggers binding of KaiB to form the KaiB(6):KaiC(6) complex, leading to changes in output regulators CikA and SasA. KaiB switches to a thioredoxin-like fold (KaiB(fs)) when bound to KaiC. KaiB(6):KaiC(6) formation exposes a site for KaiA binding that sequesters KaiA from KaiC, making the KaiC(6):KaiB(6):KaiA(12) complex that results in KaiC autodephosphorylation. Its function is as follows. A metamorphic protein which reversibly switches between an inactive tetrameric fold and a rare, thioredoxin-like monomeric fold (KaiB(fs)). KaiB(fs) binds phospho-KaiC, KaiA and CikA. KaiA and CikA compete for binding to KaiB(fs), and KaiB(fs) and SasA compete for binding to KaiC, thus the clock oscillator and output signal pathway are tightly coupled. This chain is Circadian clock oscillator protein KaiB, found in Microcystis aeruginosa (strain NIES-843 / IAM M-2473).